Reading from the N-terminus, the 468-residue chain is Probable Xaa-Pro aminopeptidase PEPP (468 aa).

Mn(2+) contacts are provided by Asp-264, Asp-275, Glu-398, and Glu-438.

This sequence belongs to the peptidase M24B family. Mn(2+) is required as a cofactor.

It catalyses the reaction Release of any N-terminal amino acid, including proline, that is linked to proline, even from a dipeptide or tripeptide.. In terms of biological role, catalyzes the removal of a penultimate prolyl residue from the N-termini of peptides. This Paracoccidioides lutzii (strain ATCC MYA-826 / Pb01) (Paracoccidioides brasiliensis) protein is Probable Xaa-Pro aminopeptidase PEPP (PEPP).